Here is a 185-residue protein sequence, read N- to C-terminus: Meiotically up-regulated gene 5 protein (185 aa).

It localises to the cytoplasm. Its function is as follows. Required for correct meiotic chromosome segregation. The chain is Meiotically up-regulated gene 5 protein (mug5) from Schizosaccharomyces pombe (strain 972 / ATCC 24843) (Fission yeast).